A 306-amino-acid chain; its full sequence is Agmatinase (306 aa).

Mn(2+) contacts are provided by His-126, Asp-149, His-151, Asp-153, Asp-230, and Asp-232.

This sequence belongs to the arginase family. Agmatinase subfamily. It depends on Mn(2+) as a cofactor.

It carries out the reaction agmatine + H2O = urea + putrescine. It functions in the pathway amine and polyamine biosynthesis; putrescine biosynthesis via agmatine pathway; putrescine from agmatine: step 1/1. In terms of biological role, catalyzes the formation of putrescine from agmatine. In Citrobacter koseri (strain ATCC BAA-895 / CDC 4225-83 / SGSC4696), this protein is Agmatinase.